Reading from the N-terminus, the 673-residue chain is Probable serine/threonine-protein kinase SCO3848 (673 aa).

Positions 11-277 (YELGPVLGRG…EMRVDIEACL (267 aa)) constitute a Protein kinase domain. Residues 17–25 (LGRGGMAEV) and lysine 40 each bind ATP. Aspartate 138 functions as the Proton acceptor in the catalytic mechanism. The interval 302–345 (DQPTTALRSDGGGGATTMLPPMNPDDGGYGYDERPDRRRQQPRK) is disordered. 4 PASTA domains span residues 379–445 (GNDK…VVST), 446–511 (GAPK…EVAK), 512–580 (AEEK…VVGK), and 581–649 (AVEK…MTVP). The tract at residues 472 to 500 (FEVETKQTESSQDEGTILSQNPDPGKELE) is disordered. Polar residues predominate over residues 479 to 493 (TESSQDEGTILSQNP). 2 disordered regions span residues 613 to 641 (AQGS…PAAT) and 653 to 673 (GNGN…GFGD).

This sequence belongs to the protein kinase superfamily. Ser/Thr protein kinase family.

The enzyme catalyses L-seryl-[protein] + ATP = O-phospho-L-seryl-[protein] + ADP + H(+). The catalysed reaction is L-threonyl-[protein] + ATP = O-phospho-L-threonyl-[protein] + ADP + H(+). This is Probable serine/threonine-protein kinase SCO3848 from Streptomyces coelicolor (strain ATCC BAA-471 / A3(2) / M145).